A 437-amino-acid polypeptide reads, in one-letter code: Purple acid phosphatase 18 (437 aa).

Positions 1 to 23 (MEKWGILLLVTLSVSIIFTSAAA) are cleaved as a signal peptide. The Fe cation site is built by Asp148, Asp175, and Tyr178. Asp175 is a binding site for Zn(2+). The Zn(2+) site is built by Asn208 and His291. Asn208 contacts substrate. His301 serves as the catalytic Proton donor. His328 serves as a coordination point for Zn(2+). 328–330 (HVH) is a substrate binding site. Fe cation is bound at residue His330. Asn390 carries an N-linked (GlcNAc...) asparagine glycan.

Belongs to the metallophosphoesterase superfamily. Purple acid phosphatase family. In terms of assembly, homodimer. Fe cation serves as cofactor. It depends on Zn(2+) as a cofactor. As to expression, expressed in roots, stems, leaves, flowers and siliques.

It is found in the secreted. It catalyses the reaction a phosphate monoester + H2O = an alcohol + phosphate. This is Purple acid phosphatase 18 (PAP18) from Arabidopsis thaliana (Mouse-ear cress).